Here is a 672-residue protein sequence, read N- to C-terminus: Probable urocanate hydratase (672 aa).

NAD(+)-binding positions include 128–129 (GG), glutamine 206, 253–255 (GMS), glutamate 273, 318–319 (NV), 340–344 (QTSLH), 351–352 (YY), tyrosine 400, and glycine 592.

This sequence belongs to the urocanase family. NAD(+) serves as cofactor.

It catalyses the reaction 4-imidazolone-5-propanoate = trans-urocanate + H2O. It functions in the pathway amino-acid degradation; L-histidine degradation into L-glutamate; N-formimidoyl-L-glutamate from L-histidine: step 2/3. The sequence is that of Probable urocanate hydratase (uroc1) from Dictyostelium discoideum (Social amoeba).